A 729-amino-acid chain; its full sequence is Denticleless protein homolog (729 aa).

An N-acetylmethionine modification is found at M1. 3 WD repeats span residues 47 to 89 (GVPV…SKKT), 96 to 135 (AHWN…LMGT), and 138 to 178 (GHQC…KDGF). The DDB1-binding motif signature appears at 168–171 (WDTR). The span at 189-198 (HNTADKQTPS) shows a compositional bias: polar residues. The segment at 189-212 (HNTADKQTPSKPKKKQNSKGLAPA) is disordered. T196 carries the post-translational modification Phosphothreonine. Positions 197–203 (PSKPKKK) match the Nuclear localization signal motif. 4 WD repeats span residues 214-253 (DSQQ…TAYR), 269-308 (TRKL…TSPV), 313-354 (GHQN…HPPT), and 358-398 (GHSQ…EEKP). Positions 243–246 (WDLR) match the DDB1-binding motif motif. Phosphoserine is present on residues S409 and S425. Disordered regions lie at residues 416-445 (KACP…SSPS) and 460-491 (PSST…VSPK). Positions 427–445 (STPAKAPRAKSSPSISSPS) are enriched in low complexity. Residues 460–475 (PSSTPTFSVKTTPATT) show a composition bias toward polar residues. T463 carries the phosphothreonine; by CDK1 and CDK2 modification. Over residues 476–491 (RSSVSRRGSISSVSPK) the composition is skewed to low complexity. Phosphoserine is present on residues S484, S489, S494, and S511. The disordered stretch occupies residues 504-546 (VTRTPSSSPPVTPPASETKISSPRKALIPVSQKSSQADACSES). Residue T515 is modified to Phosphothreonine. S556 carries the phosphoserine modification. Over residues 596–607 (VLSQDSEGPTKS) the composition is skewed to polar residues. Residues 596-705 (VLSQDSEGPT…GPVTITPSSM (110 aa)) are disordered. 2 stretches are compositionally biased toward low complexity: residues 630–645 (EGCG…CGEG) and 674–688 (SSPR…SSRR). A phosphoserine mark is found at S675 and S678. 2 positions are modified to phosphothreonine: T683 and T701.

The protein belongs to the WD repeat cdt2 family. In terms of assembly, component of the DCX(DTL) E3 ubiquitin ligase complex (also called CRL4(CDT2)), at least composed of CUL4 (CUL4A or CUL4B), DDB1, DTL/CDT2 and RBX1. Interacts with CDKN1A and DDB1. Interacts with FBXO11; SCF(FBXWO11) controls DTL stability but DCX(DTL) does not control FBXO11 stability. Interacts with CRY1. In terms of processing, ubiquitinated by the anaphase promoting complex/cyclosome (APC/C). Autoubiquitinated through 'Lys-48'-polyubiquitin chains in a PCNA-independent reaction, allowing proteasomal turnover. Polyubiquitinated by SCF(FBXO11) when not phosphorylated, leading to its degradation. A tight regulation of the polyubiquitination by SCF(FBXO11) is involved in the control of different processes such as TGF-beta signaling, cell cycle progression and exit. Phosphorylated at Thr-463 by CDK1/Cyclin B and CDK2/Cycnlin A but not by CDK2/Cyclin E, MAPK1 or PLK1. Phosphorylation at Thr-463 inhibits the interaction with FBXO11 and decreases upon cell cycle exit induced by TGF-beta or serum starvation.

It localises to the nucleus. The protein resides in the nucleus membrane. Its subcellular location is the cytoplasm. The protein localises to the cytoskeleton. It is found in the microtubule organizing center. It localises to the centrosome. The protein resides in the chromosome. Its pathway is protein modification; protein ubiquitination. Its function is as follows. Substrate-specific adapter of a DCX (DDB1-CUL4-X-box) E3 ubiquitin-protein ligase complex required for cell cycle control, DNA damage response and translesion DNA synthesis. The DCX(DTL) complex, also named CRL4(CDT2) complex, mediates the polyubiquitination and subsequent degradation of CDT1, CDKN1A/p21(CIP1), FBH1, KMT5A and SDE2. CDT1 degradation in response to DNA damage is necessary to ensure proper cell cycle regulation of DNA replication. CDKN1A/p21(CIP1) degradation during S phase or following UV irradiation is essential to control replication licensing. KMT5A degradation is also important for a proper regulation of mechanisms such as TGF-beta signaling, cell cycle progression, DNA repair and cell migration. Most substrates require their interaction with PCNA for their polyubiquitination: substrates interact with PCNA via their PIP-box, and those containing the 'K+4' motif in the PIP box, recruit the DCX(DTL) complex, leading to their degradation. In undamaged proliferating cells, the DCX(DTL) complex also promotes the 'Lys-164' monoubiquitination of PCNA, thereby being involved in PCNA-dependent translesion DNA synthesis. The DDB1-CUL4A-DTL E3 ligase complex regulates the circadian clock function by mediating the ubiquitination and degradation of CRY1. This is Denticleless protein homolog (Dtl) from Mus musculus (Mouse).